We begin with the raw amino-acid sequence, 514 residues long: Peptide chain release factor 3 (514 aa).

Residues 8–268 (KKRRTFAIIS…TFLEFAPEPH (261 aa)) enclose the tr-type G domain. GTP contacts are provided by residues 17–24 (SHPDAGKT), 85–89 (DTPGH), and 139–142 (NKLD).

It belongs to the TRAFAC class translation factor GTPase superfamily. Classic translation factor GTPase family. PrfC subfamily.

It is found in the cytoplasm. Its function is as follows. Increases the formation of ribosomal termination complexes and stimulates activities of RF-1 and RF-2. It binds guanine nucleotides and has strong preference for UGA stop codons. It may interact directly with the ribosome. The stimulation of RF-1 and RF-2 is significantly reduced by GTP and GDP, but not by GMP. In Streptococcus agalactiae serotype Ia (strain ATCC 27591 / A909 / CDC SS700), this protein is Peptide chain release factor 3.